A 521-amino-acid chain; its full sequence is Probable tRNA (uracil-O(2)-)-methyltransferase (521 aa).

It belongs to the TRM44 family.

It is found in the cytoplasm. It catalyses the reaction uridine(44) in tRNA(Ser) + S-adenosyl-L-methionine = 2'-O-methyluridine(44) in tRNA(Ser) + S-adenosyl-L-homocysteine + H(+). Functionally, probable adenosyl-L-methionine (AdoMet)-dependent tRNA (uracil-O(2)-)-methyltransferase. This chain is Probable tRNA (uracil-O(2)-)-methyltransferase (trmt44), found in Drosophila melanogaster (Fruit fly).